A 202-amino-acid polypeptide reads, in one-letter code: MVTMYFFTLSFGTVASGIMVISALNPVHSVFWLVVAFISSAALFILLGVDFIALMFIIIYVGAIAILFLFVIMMLNLTDFTPAFRRGGEADMTNYVPIGLAVGTLFFEAIASSWLIMGGPYVYRGLLGAWDLANPWFLKKYHNIEAIGRILYTDCYYLFILVSFILLVAMLGAIVLTQEIGTEIGPTAKKQDIFVQTSRAQV.

The next 5 helical transmembrane spans lie at 1–21 (MVTMYFFTLSFGTVASGIMVI), 29–49 (SVFWLVVAFISSAALFILLGV), 52–72 (IALMFIIIYVGAIAILFLFVI), 96–116 (VPIGLAVGTLFFEAIASSWLI), and 156–176 (YYLFILVSFILLVAMLGAIVL).

Belongs to the complex I subunit 6 family.

It localises to the mitochondrion membrane. The enzyme catalyses a ubiquinone + NADH + 5 H(+)(in) = a ubiquinol + NAD(+) + 4 H(+)(out). Functionally, core subunit of the mitochondrial membrane respiratory chain NADH dehydrogenase (Complex I) that is believed to belong to the minimal assembly required for catalysis. Complex I functions in the transfer of electrons from NADH to the respiratory chain. The immediate electron acceptor for the enzyme is believed to be ubiquinone. The sequence is that of NADH-ubiquinone oxidoreductase chain 6 (ND6) from Metridium senile (Brown sea anemone).